Here is a 267-residue protein sequence, read N- to C-terminus: 4-hydroxy-tetrahydrodipicolinate reductase (267 aa).

Residue 10 to 15 participates in NAD(+) binding; that stretch reads GCLGKQ. Residue Arg37 coordinates NADP(+). NAD(+)-binding positions include 99-101 and 122-125; these read GTT and TTNV. Residue His154 is the Proton donor/acceptor of the active site. Residue His155 coordinates (S)-2,3,4,5-tetrahydrodipicolinate. Lys158 functions as the Proton donor in the catalytic mechanism. 164–165 contributes to the (S)-2,3,4,5-tetrahydrodipicolinate binding site; that stretch reads GT.

The protein belongs to the DapB family.

Its subcellular location is the cytoplasm. The enzyme catalyses (S)-2,3,4,5-tetrahydrodipicolinate + NAD(+) + H2O = (2S,4S)-4-hydroxy-2,3,4,5-tetrahydrodipicolinate + NADH + H(+). It carries out the reaction (S)-2,3,4,5-tetrahydrodipicolinate + NADP(+) + H2O = (2S,4S)-4-hydroxy-2,3,4,5-tetrahydrodipicolinate + NADPH + H(+). It participates in amino-acid biosynthesis; L-lysine biosynthesis via DAP pathway; (S)-tetrahydrodipicolinate from L-aspartate: step 4/4. Its function is as follows. Catalyzes the conversion of 4-hydroxy-tetrahydrodipicolinate (HTPA) to tetrahydrodipicolinate. In Ehrlichia chaffeensis (strain ATCC CRL-10679 / Arkansas), this protein is 4-hydroxy-tetrahydrodipicolinate reductase.